We begin with the raw amino-acid sequence, 1985 residues long: Voltage-dependent L-type calcium channel subunit alpha-1F (1985 aa).

Positions 1 to 11 (MSESEVGKDTT) are enriched in basic and acidic residues. Residues 1–56 (MSESEVGKDTTPEPSPANGTGPGPEWGLCPGPPTVGTDTSGASGLGTPRRRTQHNK) are disordered. At 1 to 92 (MSESEVGKDT…RSCISIVEWK (92 aa)) the chain is on the cytoplasmic side. Residues 79 to 375 (NPIRRSCISI…LVLGVLSGEF (297 aa)) form an I repeat. The chain crosses the membrane as a helical span at residues 93–111 (PFDILILLTIFANCVALGV). The Extracellular segment spans residues 112–129 (YIPFPEDDSNTANHNLEQ). The helical transmembrane segment at 130 to 149 (VEYVFLVIFTVETVLKIVAY) threads the bilayer. Residues 150–161 (GLVLHPSAYIRN) are Cytoplasmic-facing. Residues 162–180 (GWNLLDFIIVVVGLFSVLL) form a helical membrane-spanning segment. The Extracellular portion of the chain corresponds to 181 to 201 (EQGPGRPGDAPHTGGKPGGFD). Residues 202 to 220 (VKALRAFRVLRPLRLVSGV) form a helical membrane-spanning segment. Residues 221-239 (PSLHIVVNSIMKALVPLLH) are Cytoplasmic-facing. Residues 240-259 (IALLVLFVIIIYAIIGLELF) traverse the membrane as a helical segment. At 260–347 (LGRMHKTCYF…WMQDAMGYEL (88 aa)) the chain is on the extracellular side. Residue Asn295 is glycosylated (N-linked (GlcNAc...) asparagine). Position 330 (Glu330) interacts with Ca(2+). The chain crosses the membrane as a helical span at residues 348–372 (PWVYFVSLVIFGSFFVLNLVLGVLS). The Cytoplasmic portion of the chain corresponds to 373–529 (GEFSKEREKA…ARCRRAVKSN (157 aa)). A binding to the beta subunit region spans residues 395-412 (QQMEEDLRGYLDWITQAE). The span at 455–469 (SHSTRSTHSTSSHAS) shows a compositional bias: low complexity. The interval 455 to 490 (SHSTRSTHSTSSHASLPASDTGSMTDTPGDEDEEEG) is disordered. An II repeat occupies 515-761 (NRGLRARCRR…VFLAIAVDNL (247 aa)). The chain crosses the membrane as a helical span at residues 530–549 (ACYWAVLLLVFLNTLTIASE). At 550 to 564 (HHGQPLWLTQTQEYA) the chain is on the extracellular side. Residues 565-583 (NKVLLCLFTVEMLLKLYGL) traverse the membrane as a helical segment. At 584-591 (GPSVYVAS) the chain is on the cytoplasmic side. A helical membrane pass occupies residues 592-610 (FFNRFDCFVVCGGILETTL). Over 611-620 (VEVGAMQPLG) the chain is Extracellular. A helical transmembrane segment spans residues 621-639 (ISVLRCVRLLRIFKVTRHW). The Cytoplasmic portion of the chain corresponds to 640–658 (ASLSNLVASLLNSMKSIAS). A helical membrane pass occupies residues 659–679 (LLLLLFLFIIIFSLLGMQLFG). Over 680–733 (GKFNFDQTHTKRSTFDTFPQALLTVFQILTGEDWNVVMYDGIMAYGGPFFPGML) the chain is Extracellular. Residue Glu711 coordinates Ca(2+). A helical transmembrane segment spans residues 734 to 758 (VCVYFIILFICGNYILLNVFLAIAV). At 759 to 876 (DNLASGDAGT…KACHTLIHHH (118 aa)) the chain is on the cytoplasmic side. Residues 766-834 (AGTAKDKGRE…EEEEENGAGH (69 aa)) form a disordered region. Over residues 768 to 787 (TAKDKGREKSSEGNPPKENK) the composition is skewed to basic and acidic residues. Acidic residues predominate over residues 810–830 (MEEEEEEEEEEEEEEEEEEEN). The stretch at 858 to 1140 (CLSQTNPLRK…FFMMNIFVGF (283 aa)) is one III repeat. The chain crosses the membrane as a helical span at residues 877 to 895 (IFTSLILVFIILSSVSLAA). The Extracellular segment spans residues 896 to 911 (EDPIRAHSFRNHILGY). Residues 912–931 (FDYAFTSIFTVEILLKMTVF) traverse the membrane as a helical segment. Residues 932–943 (GAFLHRGSFCRS) are Cytoplasmic-facing. Residues 944–962 (WFNLLDLLVVSVSLISFGI) traverse the membrane as a helical segment. The Extracellular portion of the chain corresponds to 963 to 968 (HSSAIS). The chain crosses the membrane as a helical span at residues 969–988 (VVKILRVLRVLRPLRAINRA). Topologically, residues 989-1007 (KGLKHVVQCVFVAIRTIGN) are cytoplasmic. Residues 1008–1027 (IMIVTTLLQFMFACIGVQLF) traverse the membrane as a helical segment. At 1028-1117 (KGKFYSCTDE…EGPIYNYHVE (90 aa)) the chain is on the extracellular side. A dihydropyridine binding region spans residues 1065–1155 (RLWVNSDFNF…RAQGEQEYQN (91 aa)). Glu1091 lines the Ca(2+) pocket. Residues 1118–1138 (ISVFFIVYIIIIAFFMMNIFV) form a helical membrane-spanning segment. The Cytoplasmic portion of the chain corresponds to 1139–1195 (GFVIITFRAQGEQEYQNCELDKNQRQCVEYALKAQPLRRYIPKNPHQYRVWATVNSR). An IV repeat occupies 1182–1449 (NPHQYRVWAT…LFVAVIMDNF (268 aa)). Residues 1196–1214 (AFEYLMFLLILLNTVALAM) traverse the membrane as a helical segment. At 1215 to 1229 (QHYEQTAPFNYAMDI) the chain is on the extracellular side. Residues 1230-1249 (LNMVFTGLFTIEMVLKIIAF) form a helical membrane-spanning segment. Over 1250–1256 (KPKHYFA) the chain is Cytoplasmic. A helical membrane pass occupies residues 1257–1278 (DAWNTFDALIVVGSVVDIAVTE). Residues 1279–1295 (VNNGGHLGESSEDTSRI) are Extracellular-facing. The helical transmembrane segment at 1296-1315 (SITFFRLFRVMRLVKLLSKG) threads the bilayer. The Cytoplasmic portion of the chain corresponds to 1316-1334 (EGIRTLLWTFIKSFQALPY). Residues 1335–1354 (VALLIAMIFFIYAVIGMQMF) traverse the membrane as a helical segment. The Extracellular segment spans residues 1355–1421 (GLVALQDGTQ…GEEFTCGSSF (67 aa)). The interval 1402-1468 (RCDPESDFGP…LGPHHLDEFK (67 aa)) is dihydropyridine binding. Residues 1414–1457 (EFTCGSSFAIVYFISFFMLCAFLIINLFVAVIMDNFDYLTRDWS) are phenylalkylamine binding. A helical membrane pass occupies residues 1422 to 1446 (AIVYFISFFMLCAFLIINLFVAVIM). Residues 1447-1982 (DNFDYLTRDW…EDLGDEMACV (536 aa)) are Cytoplasmic-facing. Disordered regions lie at residues 1643–1729 (VTEE…PHRR) and 1746–1778 (LKGT…SFEP). Residues 1644–1665 (TEEEEEEEEAVGQEAEEEEAEN) show a composition bias toward acidic residues. 2 stretches are compositionally biased toward polar residues: residues 1675-1687 (DSQP…SRIS) and 1713-1724 (NSRQPSVIQAGS). The span at 1767–1776 (DLDRAGRDSF) shows a compositional bias: basic and acidic residues.

It belongs to the calcium channel alpha-1 subunit (TC 1.A.1.11) family. CACNA1F subfamily. As to quaternary structure, voltage-dependent calcium channels are multisubunit complexes, consisting of alpha-1, alpha-2, beta and delta subunits in a 1:1:1:1 ratio. The channel activity is directed by the pore-forming and voltage-sensitive alpha-1 subunit. In many cases, this subunit is sufficient to generate voltage-sensitive calcium channel activity. The auxiliary subunits beta and alpha-2/delta linked by a disulfide bridge regulate the channel activity. Interacts (via IQ domain) with CABP4; in a calcium independent manner. As to expression, expressed in the inner and outer nuclear layers and the genglion cell layer of the retina.

The protein localises to the membrane. It carries out the reaction Ca(2+)(in) = Ca(2+)(out). Its function is as follows. Voltage-sensitive calcium channels (VSCC) mediate the entry of calcium ions into excitable cells and are also involved in a variety of calcium-dependent processes, including muscle contraction, hormone or neurotransmitter release, gene expression, cell motility, cell division and cell death. The isoform alpha-1F gives rise to L-type calcium currents. Long-lasting (L-type) calcium channels belong to the 'high-voltage activated' (HVA) group. They are blocked by dihydropyridines (DHP), phenylalkylamines, and by benzothiazepines. Activates at more negative voltages and does not undergo calcium-dependent inactivation (CDI), due to incoming calcium ions, during depolarization. This is Voltage-dependent L-type calcium channel subunit alpha-1F from Mus musculus (Mouse).